The primary structure comprises 207 residues: ATP synthase subunit 5, mitochondrial (207 aa).

This sequence belongs to the ATPase delta chain family. F-type ATPases have 2 components, CF(1) - the catalytic core - and CF(0) - the membrane proton channel. CF(1) has five subunits: alpha(3), beta(3), gamma(1), delta(1), epsilon(1). CF(0) has three main subunits: a, b and c.

Its subcellular location is the mitochondrion. It localises to the mitochondrion inner membrane. In terms of biological role, mitochondrial membrane ATP synthase (F(1)F(0) ATP synthase or Complex V) produces ATP from ADP in the presence of a proton gradient across the membrane which is generated by electron transport complexes of the respiratory chain. F-type ATPases consist of two structural domains, F(1) - containing the extramembraneous catalytic core and F(0) - containing the membrane proton channel, linked together by a central stalk and a peripheral stalk. During catalysis, ATP synthesis in the catalytic domain of F(1) is coupled via a rotary mechanism of the central stalk subunits to proton translocation. Part of the complex F(0) domain and the peripheric stalk, which acts as a stator to hold the catalytic alpha(3)beta(3) subcomplex and subunit a/ATP6 static relative to the rotary elements. This chain is ATP synthase subunit 5, mitochondrial (ATP5), found in Candida glabrata (strain ATCC 2001 / BCRC 20586 / JCM 3761 / NBRC 0622 / NRRL Y-65 / CBS 138) (Yeast).